The following is an 822-amino-acid chain: MWGWKCLLFWAVLVTATLCTARPAPTLPEQAQPWGVPVEVESLLVHPGDLLQLRCRLRDDVQSINWLRDGVQLVESNRTRITGEEVEVRDSIPADSGLYACVTSSPSGSDTTYFSVNVSDALPSSEDDDDDDDSSSEEKETDNTKPNRRPVAPYWTSPEKMEKKLHAVPAAKTVKFKCPSSGTPNPTLRWLKNGKEFKPDHRIGGYKVRYATWSIIMDSVVPSDKGNYTCIVENEYGSINHTYQLDVVERSPHRPILQAGLPANKTVALGSNVEFMCKVYSDPQPHIQWLKHIEVNGSKIGPDNLPYVQILKTAGVNTTDKEMEVLHLRNVSFEDAGEYTCLAGNSIGLSHHSAWLTVLEALEERPAVMTSPLYLEIIIYCTGAFLISCMLGSVIIYKMKSGTKKSDFHSQMAVHKLAKSIPLRRQVTVSADSSASMNSGVLLVRPSRLSSSGTPMLAGVSEYELPEDPRWELPRDRLVLGKPLGEGCFGQVVLAEAIGLDKDKPNRVTKVAVKMLKSDATEKDLSDLISEMEMMKMIGKHKNIINLLGACTQDGPLYVIVEYASKGNLREYLQARRPPGLEYCYNPSHNPEEQLSSKDLVSCAYQVARGMEYLASKKCIHRDLAARNVLVTEDNVMKIADFGLARDIHHIDYYKKTTNGRLPVKWMAPEALFDRIYTHQSDVWSFGVLLWEIFTLGGSPYPGVPVEELFKLLKEGHRMDKPSNCTNELYMMMRDCWHAVPSQRPTFKQLVEDLDRIVALTSNQEYLDLSIPLDQYSPSFPDTRSSTCSSGEDSVFSHEPLPEEPCLPRHPTQLANSGLKRR.

Residues 1 to 21 (MWGWKCLLFWAVLVTATLCTA) form the signal peptide. Topologically, residues 22 to 376 (RPAPTLPEQA…AVMTSPLYLE (355 aa)) are extracellular. The 95-residue stretch at 25 to 119 (PTLPEQAQPW…DTTYFSVNVS (95 aa)) folds into the Ig-like C2-type 1 domain. Cys-55 and Cys-101 are joined by a disulfide. N-linked (GlcNAc...) asparagine glycans are attached at residues Asn-77 and Asn-117. Residues 120-162 (DALPSSEDDDDDDDSSSEEKETDNTKPNRRPVAPYWTSPEKME) are disordered. A compositionally biased stretch (acidic residues) spans 125–135 (SEDDDDDDDSS). A compositionally biased stretch (basic and acidic residues) spans 136 to 145 (SEEKETDNTK). Ig-like C2-type domains are found at residues 158-246 (PEKM…YQLD) and 255-357 (PILQ…AWLT). The heparin-binding stretch occupies residues 160–177 (KMEKKLHAVPAAKTVKFK). Cys-178 and Cys-230 are oxidised to a cystine. Asn-227, Asn-240, Asn-264, Asn-296, Asn-317, and Asn-330 each carry an N-linked (GlcNAc...) asparagine glycan. A disulfide bond links Cys-277 and Cys-341. A helical membrane pass occupies residues 377 to 397 (IIIYCTGAFLISCMLGSVIIY). At 398 to 822 (KMKSGTKKSD…QLANSGLKRR (425 aa)) the chain is on the cytoplasmic side. The residue at position 463 (Tyr-463) is a Phosphotyrosine; by autocatalysis. One can recognise a Protein kinase domain in the interval 478–767 (LVLGKPLGEG…VALTSNQEYL (290 aa)). ATP is bound by residues 484-490 (LGEGCFG), Lys-514, 562-564 (EYA), and Asn-568. Tyr-583 and Tyr-585 each carry phosphotyrosine; by autocatalysis. Catalysis depends on Asp-623, which acts as the Proton acceptor. The ATP site is built by Arg-627 and Asp-641. 4 positions are modified to phosphotyrosine; by autocatalysis: Tyr-653, Tyr-654, Tyr-730, and Tyr-766. The span at 782 to 792 (DTRSSTCSSGE) shows a compositional bias: polar residues. The segment at 782 to 822 (DTRSSTCSSGEDSVFSHEPLPEEPCLPRHPTQLANSGLKRR) is disordered.

The protein belongs to the protein kinase superfamily. Tyr protein kinase family. Fibroblast growth factor receptor subfamily. Monomer. Homodimer after ligand binding. Interacts predominantly with FGF1 and FGF2, but can also interact with FGF3, FGF4, FGF5, FGF6, FGF8, FGF10, FGF19, FGF21, FGF22 and FGF23 (in vitro). Ligand specificity is determined by tissue-specific expression of isoforms, and differences in the third Ig-like domain are crucial for ligand specificity. Affinity for fibroblast growth factors (FGFs) is increased by heparan sulfate glycosaminoglycans that function as coreceptors. Likewise, KLB increases the affinity for FGF19, FGF21 and FGF23. Interacts (phosphorylated on Tyr-766) with PLCG1 (via SH2 domains). Interacts with FRS2. Interacts with RPS6KA1. Interacts (via C-terminus) with NEDD4 (via WW3 domain). Interacts with KL. Interacts with SHB (via SH2 domain). Interacts with GRB10. Interacts with ANOS1; this interaction does not interfere with FGF2-binding to FGFR1, but prevents binding of heparin-bound FGF2. Interacts with SOX2 and SOX3. Interacts with FLRT1, FLRT2 and FLRT3. Found in a ternary complex with FGF1 and ITGAV:ITGB3. Autophosphorylated. Binding of FGF family members together with heparan sulfate proteoglycan or heparin promotes receptor dimerization and autophosphorylation on tyrosine residues. Autophosphorylation occurs in trans between the two FGFR molecules present in the dimer and proceeds in a highly ordered manner. Initial autophosphorylation at Tyr-653 increases the kinase activity by a factor of 50 to 100. After this, Tyr-583 becomes phosphorylated, followed by phosphorylation of Tyr-463, Tyr-766, Tyr-583 and Tyr-585. In a third stage, Tyr-654 is autophosphorylated, resulting in a further tenfold increase of kinase activity. Phosphotyrosine residues provide docking sites for interacting proteins and so are crucial for FGFR1 function and its regulation. In terms of processing, ubiquitinated. FGFR1 is rapidly ubiquitinated by NEDD4 after autophosphorylation, leading to internalization and lysosomal degradation. CBL is recruited to activated FGFR1 via FRS2 and GRB2, and mediates ubiquitination and subsequent degradation of FGFR1. Post-translationally, N-glycosylated in the endoplasmic reticulum. The N-glycan chains undergo further maturation to an Endo H-resistant form in the Golgi apparatus. In terms of tissue distribution, widely expressed.

It localises to the cell membrane. The protein localises to the nucleus. The protein resides in the cytoplasm. Its subcellular location is the cytosol. It is found in the cytoplasmic vesicle. It catalyses the reaction L-tyrosyl-[protein] + ATP = O-phospho-L-tyrosyl-[protein] + ADP + H(+). Its activity is regulated as follows. Present in an inactive conformation in the absence of bound ligand. Ligand binding leads to dimerization and activation by sequential autophosphorylation on tyrosine residues. Tyrosine-protein kinase that acts as a cell-surface receptor for fibroblast growth factors and plays an essential role in the regulation of embryonic development, cell proliferation, differentiation and migration. Required for normal mesoderm patterning and correct axial organization during embryonic development, normal skeletogenesis and normal development of the gonadotropin-releasing hormone (GnRH) neuronal system. Phosphorylates PLCG1, FRS2, GAB1 and SHB. Ligand binding leads to the activation of several signaling cascades. Activation of PLCG1 leads to the production of the cellular signaling molecules diacylglycerol and inositol 1,4,5-trisphosphate. Phosphorylation of FRS2 triggers recruitment of GRB2, GAB1, PIK3R1 and SOS1, and mediates activation of RAS, MAPK1/ERK2, MAPK3/ERK1 and the MAP kinase signaling pathway, as well as of the AKT1 signaling pathway. Promotes phosphorylation of SHC1, STAT1 and PTPN11/SHP2. In the nucleus, enhances RPS6KA1 and CREB1 activity and contributes to the regulation of transcription. FGFR1 signaling is down-regulated by IL17RD/SEF, and by FGFR1 ubiquitination, internalization and degradation. The sequence is that of Fibroblast growth factor receptor 1 (Fgfr1) from Mus musculus (Mouse).